A 193-amino-acid polypeptide reads, in one-letter code: Signal peptidase I T (193 aa).

Residues Met-1–Lys-25 lie on the Cytoplasmic side of the membrane. The chain crosses the membrane as a helical span at residues Ala-26 to Phe-42. The Extracellular segment spans residues Glu-43–Lys-193. Residues Ser-51 and Lys-93 contribute to the active site.

Belongs to the peptidase S26 family.

The protein resides in the cell membrane. It carries out the reaction Cleavage of hydrophobic, N-terminal signal or leader sequences from secreted and periplasmic proteins.. This Bacillus subtilis (strain 168) protein is Signal peptidase I T (sipT).